A 648-amino-acid chain; its full sequence is MNRLPNIAKPPQKSNQRKEKAPPEVPALIADKDRGTYYEKGRFLGKGGFAHCYELTNRATREVVAGKVVPKSMLVKQYQRDKMTQEVQIHRELGHINIVKLFNFFEDNLNVYITLELCARRSLMELHKRRKAVTEPEARYFTHQIVDGVLYLHDLNIIHRDMKLGNLFLNDDLVVKIGDFGLATTVNGDERKKTLCGTPNYIAPEVLNKAGHSFEVDIWAVGCILYILLFGQPPFESKSLEETYSRIRHNNYTIPSIATQPAASLIRKMLDPEPTRRPTAKQVQRDGFFKSGFMPTRLPVSCLTMVPKFGGHETSMMEENVAPRGVDARSQRPLNGRAGLSALPQHIVSNNADRERAQQQAAEATFREPEDAYLSQLFHQVAVLLEQRIPGLEEEEAALDGYQSPECLPVFWISKWVDYSDKYGIGYQLCDNSVGVLFNDNSRIMLDQAGNELTYIEKSNKEHYFSMHSGEMPGLLNKKVTLLKYFRSYMNDHLVKAGEGSEQRAGDDLARLPTLRVWFRTKSAIVLHLSNGTVQINFFNDHVKMMMCPLMQAVTFIDQNKRMLTYKLNNLQRNGCPEKFLHRLKYAKTMIERLMSDANVVSQNPARQPDMPRSMAAARSASAGSRGPNQAASHLPQSASGSNIHPRR.

Residues 1-24 form a disordered region; sequence MNRLPNIAKPPQKSNQRKEKAPPE. Residues 38–289 enclose the Protein kinase domain; that stretch reads YEKGRFLGKG…AKQVQRDGFF (252 aa). Residues 44–52 and Lys-67 each bind ATP; that span reads LGKGGFAHC. Asp-161 (proton acceptor) is an active-site residue. POLO box domains lie at 412-492 and 514-596; these read WISK…YMND and TLRV…RLMS. Residues 612-629 are compositionally biased toward low complexity; it reads PRSMAAARSASAGSRGPN.

Belongs to the protein kinase superfamily. Ser/Thr protein kinase family. CDC5/Polo subfamily. Interacts with mex-5, mex-6 and spat-1. Embryos.

The protein resides in the cytoplasm. It localises to the cytoskeleton. The protein localises to the microtubule organizing center. Its subcellular location is the centrosome. It is found in the midbody. The protein resides in the nucleus. It localises to the chromosome. The protein localises to the centromere. Its subcellular location is the kinetochore. It catalyses the reaction L-seryl-[protein] + ATP = O-phospho-L-seryl-[protein] + ADP + H(+). It carries out the reaction L-threonyl-[protein] + ATP = O-phospho-L-threonyl-[protein] + ADP + H(+). Functionally, required for oocyte nuclear envelope breakdown before entry of oocyte into spermatheca. In meiotic cells, required for spindle dynamics and probably for spindle attachment to the chromosomes. Zygotic role in the development of the germline and nerve cord. In mitotic cells, plays a role in spindle organization and centrosome maturation. Involved in asymmetric nuclear localization of cdc-25.1 during embryogenesis which affects cell division timing. Together with plk-2, regulates cytoplasm polarity in early embryos. May play a minor role in chromosome pairing and synapsis during oocyte meiosis I. This is Serine/threonine-protein kinase plk-1 (plk-1) from Caenorhabditis elegans.